A 64-amino-acid polypeptide reads, in one-letter code: Large ribosomal subunit protein bL28 (64 aa).

The protein belongs to the bacterial ribosomal protein bL28 family.

In Syntrophobacter fumaroxidans (strain DSM 10017 / MPOB), this protein is Large ribosomal subunit protein bL28.